The chain runs to 464 residues: Trigger factor (464 aa).

Residues 166 to 245 enclose the PPIase FKBP-type domain; that stretch reads GDFLTIDITA…VKAVKERELP (80 aa). Residues 426–464 form a disordered region; it reads FVRPGGEEEAPAAEVTEADTAEGEATEVPAEDEKAEAKA. The segment covering 432–455 has biased composition (acidic residues); that stretch reads EEEAPAAEVTEADTAEGEATEVPA.

It belongs to the FKBP-type PPIase family. Tig subfamily.

The protein localises to the cytoplasm. It carries out the reaction [protein]-peptidylproline (omega=180) = [protein]-peptidylproline (omega=0). Functionally, involved in protein export. Acts as a chaperone by maintaining the newly synthesized protein in an open conformation. Functions as a peptidyl-prolyl cis-trans isomerase. This is Trigger factor from Pseudarthrobacter chlorophenolicus (strain ATCC 700700 / DSM 12829 / CIP 107037 / JCM 12360 / KCTC 9906 / NCIMB 13794 / A6) (Arthrobacter chlorophenolicus).